Here is a 124-residue protein sequence, read N- to C-terminus: Urease subunit beta (124 aa).

This sequence belongs to the urease beta subunit family. In terms of assembly, heterotrimer of UreA (gamma), UreB (beta) and UreC (alpha) subunits. Three heterotrimers associate to form the active enzyme.

The protein localises to the cytoplasm. It carries out the reaction urea + 2 H2O + H(+) = hydrogencarbonate + 2 NH4(+). It participates in nitrogen metabolism; urea degradation; CO(2) and NH(3) from urea (urease route): step 1/1. The polypeptide is Urease subunit beta (Halalkalibacterium halodurans (strain ATCC BAA-125 / DSM 18197 / FERM 7344 / JCM 9153 / C-125) (Bacillus halodurans)).